A 33-amino-acid chain; its full sequence is Photosystem II reaction center protein T (33 aa).

The helical transmembrane segment at alanine 3–phenylalanine 23 threads the bilayer.

This sequence belongs to the PsbT family. As to quaternary structure, PSII is composed of 1 copy each of membrane proteins PsbA, PsbB, PsbC, PsbD, PsbE, PsbF, PsbH, PsbI, PsbJ, PsbK, PsbL, PsbM, PsbT, PsbY, PsbZ, Psb30/Ycf12, at least 3 peripheral proteins of the oxygen-evolving complex and a large number of cofactors. It forms dimeric complexes.

Its subcellular location is the plastid. It localises to the chloroplast thylakoid membrane. In terms of biological role, found at the monomer-monomer interface of the photosystem II (PS II) dimer, plays a role in assembly and dimerization of PSII. PSII is a light-driven water plastoquinone oxidoreductase, using light energy to abstract electrons from H(2)O, generating a proton gradient subsequently used for ATP formation. The protein is Photosystem II reaction center protein T of Asparagus officinalis (Garden asparagus).